The primary structure comprises 765 residues: Periplasmic beta-glucosidase (765 aa).

A signal peptide spans 1 to 20 (MKWLCSVGVAVSLAMQPALA). The active site involves Asp-287.

Belongs to the glycosyl hydrolase 3 family.

The protein resides in the periplasm. The catalysed reaction is Hydrolysis of terminal, non-reducing beta-D-glucosyl residues with release of beta-D-glucose.. The sequence is that of Periplasmic beta-glucosidase (bglX) from Salmonella typhimurium (strain LT2 / SGSC1412 / ATCC 700720).